Here is a 528-residue protein sequence, read N- to C-terminus: Phosphoenolpyruvate carboxykinase (ATP) (528 aa).

The substrate site is built by R56, Y192, and K198. ATP contacts are provided by residues K198, H217, and 233–241; that span reads GLSGTGKTT. Mn(2+) contacts are provided by K198 and H217. D254 lines the Mn(2+) pocket. E282, R319, and T444 together coordinate ATP. R319 lines the substrate pocket.

The protein belongs to the phosphoenolpyruvate carboxykinase (ATP) family. Mn(2+) is required as a cofactor.

It is found in the cytoplasm. It catalyses the reaction oxaloacetate + ATP = phosphoenolpyruvate + ADP + CO2. It functions in the pathway carbohydrate biosynthesis; gluconeogenesis. Involved in the gluconeogenesis. Catalyzes the conversion of oxaloacetate (OAA) to phosphoenolpyruvate (PEP) through direct phosphoryl transfer between the nucleoside triphosphate and OAA. This Bacillus mycoides (strain KBAB4) (Bacillus weihenstephanensis) protein is Phosphoenolpyruvate carboxykinase (ATP).